A 198-amino-acid polypeptide reads, in one-letter code: Single-stranded DNA cytosine deaminase (198 aa).

Residues 1-30 (MDSLLMKQKKFLYHFKNVRWAKGRHETYLC) carry the Bipartite nuclear localization signal motif. Positions 2-26 (DSLLMKQKKFLYHFKNVRWAKGRHE) are interaction with SUPT6H. Residues 23 to 129 (GRHETYLCYV…KAEPEGLRRL (107 aa)) enclose the CMP/dCMP-type deaminase domain. Phosphothreonine; by PKA is present on Thr27. The residue at position 38 (Ser38) is a Phosphoserine; by PKA. Residues 39–42 (ATSC) are important for interaction with CTNNBL1. His56 is a Zn(2+) binding site. Glu58 functions as the Proton donor in the catalytic mechanism. Residues Cys87 and Cys90 each contribute to the Zn(2+) site. The tract at residues 88 to 116 (YDCARHVAEFLRWNPNLSLRIFTARLYFC) is required for interaction with RNF126. The short motif at 183–198 (LYEVDDLRDAFRMLGF) is the Nuclear export signal element.

It belongs to the cytidine and deoxycytidylate deaminase family. Interacts with CTNNBL1; the interaction is important for the immunoglobulin switch activity of AICDA. Interacts (via its NLS) with KPNA1. Interacts with PKA/PRKACA and PRKAR1A/PKR1. Interacts with SUPT6H, TRIM28 and NCL. Directly interacts with MCM3AP/GANP; this interaction may favor AICDA recruitment to immunoglobulin variable region genes, hence promoting somatic hypermutations. Zn(2+) is required as a cofactor. Ser-38 is the major site whereas Thr-27 is the minor site of phosphorylation. Phosphorylation regulates its class-switch recombination activity. Post-translationally, probably monoubiquitinated on several residues by RNF126. In terms of tissue distribution, expressed in germinal center B-cells (at protein level).

It is found in the nucleus. The protein localises to the cytoplasm. The catalysed reaction is a 2'-deoxycytidine in single-stranded DNA + H2O + H(+) = a 2'-deoxyuridine in single-stranded DNA + NH4(+). Single-stranded DNA-specific cytidine deaminase. Involved in somatic hypermutation (SHM), gene conversion, and class-switch recombination (CSR) in B-lymphocytes by deaminating C to U during transcription of Ig-variable (V) and Ig-switch (S) region DNA. Required for several crucial steps of B-cell terminal differentiation necessary for efficient antibody responses. May also play a role in the epigenetic regulation of gene expression by participating in DNA demethylation. This Mus musculus (Mouse) protein is Single-stranded DNA cytosine deaminase (Aicda).